Here is a 514-residue protein sequence, read N- to C-terminus: UDP-N-acetylmuramoyl-L-alanyl-D-glutamate--2,6-diaminopimelate ligase (514 aa).

T37 serves as a coordination point for UDP-N-acetyl-alpha-D-muramoyl-L-alanyl-D-glutamate. 125-131 (GTNGKTS) serves as a coordination point for ATP. UDP-N-acetyl-alpha-D-muramoyl-L-alanyl-D-glutamate is bound by residues 167-168 (TT), S194, Q200, and R202. Residue K234 is modified to N6-carboxylysine. Meso-2,6-diaminopimelate is bound by residues R406, 430 to 433 (DNPR), G481, and E485. The Meso-diaminopimelate recognition motif signature appears at 430–433 (DNPR).

The protein belongs to the MurCDEF family. MurE subfamily. It depends on Mg(2+) as a cofactor. Post-translationally, carboxylation is probably crucial for Mg(2+) binding and, consequently, for the gamma-phosphate positioning of ATP.

It is found in the cytoplasm. It catalyses the reaction UDP-N-acetyl-alpha-D-muramoyl-L-alanyl-D-glutamate + meso-2,6-diaminopimelate + ATP = UDP-N-acetyl-alpha-D-muramoyl-L-alanyl-gamma-D-glutamyl-meso-2,6-diaminopimelate + ADP + phosphate + H(+). The protein operates within cell wall biogenesis; peptidoglycan biosynthesis. Functionally, catalyzes the addition of meso-diaminopimelic acid to the nucleotide precursor UDP-N-acetylmuramoyl-L-alanyl-D-glutamate (UMAG) in the biosynthesis of bacterial cell-wall peptidoglycan. This Ralstonia nicotianae (strain ATCC BAA-1114 / GMI1000) (Ralstonia solanacearum) protein is UDP-N-acetylmuramoyl-L-alanyl-D-glutamate--2,6-diaminopimelate ligase.